A 542-amino-acid chain; its full sequence is Membrane protein insertase YidC (542 aa).

A run of 5 helical transmembrane segments spans residues 7–27 (LLVMGLLLVSFLIFTQWQQDF), 338–358 (FALLTFIQSIVTNWGLAIIGV), 417–437 (MGGCLPILIQMPIFIALYWTF), 455–475 (LSAQDPYYILPLLMGASMFLL), and 494–514 (FMPVMFTVFFLWFPSGLVLYW).

This sequence belongs to the OXA1/ALB3/YidC family. Type 1 subfamily. Interacts with the Sec translocase complex via SecD. Specifically interacts with transmembrane segments of nascent integral membrane proteins during membrane integration.

It is found in the cell inner membrane. Required for the insertion and/or proper folding and/or complex formation of integral membrane proteins into the membrane. Involved in integration of membrane proteins that insert both dependently and independently of the Sec translocase complex, as well as at least some lipoproteins. Aids folding of multispanning membrane proteins. This chain is Membrane protein insertase YidC, found in Actinobacillus pleuropneumoniae serotype 7 (strain AP76).